Consider the following 945-residue polypeptide: MSELSRFFIEIAERWQKRWKESRVFEPEPTPGVAKYFITAAYPYPNGAVHIGHGRTYLIADVLARFYRHMGRVVLYPMGFHYTGTPILTIAEVIAAGDKTVIEEYMEIYGVPEEEIKKMGDPLYLARYFHNRSKMAMERFGLSIDWTREFTTIDPEYQRFIQWQFEKLRKKGLIVRGRHPVGWCPRHSMPVGAHDTKDDKEPEIGQWTLIYFTDSEGLTFPAATLRPETVPGVTNLWINPDAEYVVAEFDGKRVVISRDAAYRLSFQAEVKILREARGREFVGRSVQNPVTGEWVPIYEAWFVDPRVGTGVVMSVPAHAPYDYVALRDLGIEKLIPLIKVEGYGDYPAKEVVERMGIKSQTDPALEEATKEVYSTEYTRGVMREDVTERIGIHLQEPARSMLRAVFKMYFAGRPVREAREFIAKWLVEARLGGVMYDIMNKPVYCRCGTEIVVKVLEDQWFINYGDPKWKETARKLVDEMVIIPGEAKAHFFATIDWLDKRACARTRGLGTPLPWSSGWIIESLSDSTIYMAFYTVIKKIRQFGIRPEQLTEEFWDFVFLGQGSADEVSKKTGVPVEALKAIREEFEYWYPLDSRNSGKDLIPNHLTFFIFNHVAIFPREKWPRQIVANGWVLREGEKMSKSKRNVLPLDRAVEMYGPDPLRATLALAAEVEQDLDFRDAEARRNAQQLMAIYTLVQRLIQNAENRPAGWIDQWLIAEISRILDKAREAYEKVRVRQAAVEVIYNAKAVFDQYLAMVEKPTKLALEAARAWVVAMEPIVPHIAEELWALLGGSGFVATAPWPRLKAESAALLAKRYVDMLIEDVKNIPAFGPGARRIVIYVNRNFSWAKAALNGDVKTVVTAGAPPQVAKRLIDLVKTLGDEVRTLLASTEQFDELETLKSYKAYIERTLGTPIEIYSVDDPSAPDLGGKKRAALPLKPGIYIER.

Positions 43–53 (PYPNGAVHIGH) match the 'HIGH' region motif. The short motif at 638–642 (KMSKS) is the 'KMSKS' region element. Lys-641 contributes to the ATP binding site.

It belongs to the class-I aminoacyl-tRNA synthetase family.

Its subcellular location is the cytoplasm. The catalysed reaction is tRNA(Leu) + L-leucine + ATP = L-leucyl-tRNA(Leu) + AMP + diphosphate. This is Leucine--tRNA ligase from Pyrobaculum islandicum (strain DSM 4184 / JCM 9189 / GEO3).